Here is a 915-residue protein sequence, read N- to C-terminus: Protein inturned (915 aa).

The segment at 88-144 (NAKRQANSSNKSEAKLKKLTKILRRKRRPSQRKAEGKDSSQRPASILKNQAGQRPGV) is disordered. The span at 104–118 (KKLTKILRRKRRPSQ) shows a compositional bias: basic residues. Over residues 128–139 (QRPASILKNQAG) the composition is skewed to polar residues. The region spanning 165 to 253 (SVSSSSADRG…PMQVRLTLET (89 aa)) is the PDZ domain. Residues 688 to 738 (GIRGRRASPQRSQSDSGSEGHADGTPASVARRDSLGSGGSDGSLGSAGFLK) form a disordered region.

Belongs to the inturned family.

It is found in the cytoplasm. It localises to the cell surface. The protein localises to the cytoskeleton. Its subcellular location is the cilium basal body. Functionally, plays a key role in ciliogenesis and embryonic development. Regulator of cilia formation by controlling the organization of the apical actin cytoskeleton and the positioning of the basal bodies at the apical cell surface, which in turn is essential for the normal orientation of elongating ciliary microtubules. Plays a key role in definition of cell polarity via its role in ciliogenesis but not via conversion extension. Has an indirect effect on hedgehog signaling. In Danio rerio (Zebrafish), this protein is Protein inturned (intu).